Here is a 348-residue protein sequence, read N- to C-terminus: Sulfate/thiosulfate import ATP-binding protein CysA (348 aa).

Positions 3-233 (ILIDNISKKF…PATPFVFSLL (231 aa)) constitute an ABC transporter domain. 35–42 (GPSGSGKS) is a binding site for ATP.

Belongs to the ABC transporter superfamily. Sulfate/tungstate importer (TC 3.A.1.6) family.

The protein localises to the plastid. It is found in the chloroplast. It catalyses the reaction sulfate(out) + ATP + H2O = sulfate(in) + ADP + phosphate + H(+). The enzyme catalyses thiosulfate(out) + ATP + H2O = thiosulfate(in) + ADP + phosphate + H(+). Part of the ABC transporter complex involved in sulfate/thiosulfate import. Responsible for energy coupling to the transport system. This is Sulfate/thiosulfate import ATP-binding protein CysA from Mesostigma viride (Green alga).